The primary structure comprises 1096 residues: Protein transport protein SEC24 B (1096 aa).

The tract at residues 1–315 (MAAPVPPGAY…SAPGTPGSIY (315 aa)) is disordered. The span at 12 to 23 (PNNNQQNSGGPP) shows a compositional bias: low complexity. Polar residues predominate over residues 27–45 (PGSQGNPNSLAANMQNLNI). The span at 47–64 (RPPPPMPGSGPRPSPPFG) shows a compositional bias: pro residues. Low complexity predominate over residues 65-78 (QSPQSFPQQQQQQP). Pro residues predominate over residues 79-92 (RPSPMARPGPPPPA). A compositionally biased stretch (low complexity) spans 93–107 (AMARPGGPPQVSQPG). Residues 108-122 (GFPPVGRPVAPPSNQ) show a composition bias toward pro residues. Positions 140–149 (SFPQPGGFPA) are enriched in low complexity. 4 stretches are compositionally biased toward pro residues: residues 150–160 (SGPPGGVPSGP), 171–186 (SPPP…PPSG), 246–258 (MAPP…PPNA), and 287–303 (GRPP…PPQQ). Zn(2+) is bound by residues cysteine 433, cysteine 436, cysteine 455, and cysteine 458. A zinc finger-like region spans residues 433-458 (CSRCKGYVNPFMKFIDQGRKFICNLC).

The protein belongs to the SEC23/SEC24 family. SEC24 subfamily. Component of the coat protein complex II (COPII), composed of at least five proteins: the Sec23/24 complex, the Sec13/31 complex and Sar1. As to expression, mainly expressed in pollen, roots, stems, petioles and hypocotyls, and, to a lower extent, in leaves and cotyledons.

It localises to the cytoplasmic vesicle. The protein localises to the COPII-coated vesicle membrane. Its subcellular location is the endoplasmic reticulum membrane. It is found in the golgi apparatus membrane. Functionally, component of the coat protein complex II (COPII), that covers ER-derived vesicles involved in transport from the endoplasmic reticulum to the Golgi apparatus. COPII is composed of at least five proteins: the SEC23/24 complex, the SEC13/31 complex, and the protein SAR1. Acts in the cytoplasm to promote the transport of secretory, plasma membrane, and vacuolar proteins from the endoplasmic reticulum to the Golgi complex. This is Protein transport protein SEC24 B from Arabidopsis thaliana (Mouse-ear cress).